The primary structure comprises 113 residues: Large ribosomal subunit protein bL19 (113 aa).

It belongs to the bacterial ribosomal protein bL19 family.

This protein is located at the 30S-50S ribosomal subunit interface and may play a role in the structure and function of the aminoacyl-tRNA binding site. The polypeptide is Large ribosomal subunit protein bL19 (Rhodococcus erythropolis (strain PR4 / NBRC 100887)).